We begin with the raw amino-acid sequence, 150 residues long: Large ribosomal subunit protein uL22c (150 aa).

It belongs to the universal ribosomal protein uL22 family. Part of the 50S ribosomal subunit.

It localises to the plastid. Its function is as follows. This protein binds specifically to 23S rRNA. Functionally, the globular domain of the protein is located near the polypeptide exit tunnel on the outside of the subunit, while an extended beta-hairpin is found that lines the wall of the exit tunnel in the center of the 70S ribosome. The chain is Large ribosomal subunit protein uL22c (rpl22) from Orobanche minor (Small broomrape).